We begin with the raw amino-acid sequence, 103 residues long: NADH-quinone oxidoreductase subunit K 2 (103 aa).

3 helical membrane-spanning segments follow: residues 7–27 (LAWY…GFMI), 31–51 (IITI…TFVA), and 63–83 (IFVF…LGII).

This sequence belongs to the complex I subunit 4L family. As to quaternary structure, NDH-1 is composed of 14 different subunits. Subunits NuoA, H, J, K, L, M, N constitute the membrane sector of the complex.

It localises to the cell inner membrane. It carries out the reaction a quinone + NADH + 5 H(+)(in) = a quinol + NAD(+) + 4 H(+)(out). In terms of biological role, NDH-1 shuttles electrons from NADH, via FMN and iron-sulfur (Fe-S) centers, to quinones in the respiratory chain. The immediate electron acceptor for the enzyme in this species is believed to be ubiquinone. Couples the redox reaction to proton translocation (for every two electrons transferred, four hydrogen ions are translocated across the cytoplasmic membrane), and thus conserves the redox energy in a proton gradient. The protein is NADH-quinone oxidoreductase subunit K 2 of Koribacter versatilis (strain Ellin345).